Here is a 302-residue protein sequence, read N- to C-terminus: Large ribosomal subunit protein uL18 (302 aa).

The protein belongs to the universal ribosomal protein uL18 family. Component of the large ribosomal subunit (LSU).

Its subcellular location is the cytoplasm. It localises to the nucleus. Functionally, component of the ribosome, a large ribonucleoprotein complex responsible for the synthesis of proteins in the cell. The small ribosomal subunit (SSU) binds messenger RNAs (mRNAs) and translates the encoded message by selecting cognate aminoacyl-transfer RNA (tRNA) molecules. The large subunit (LSU) contains the ribosomal catalytic site termed the peptidyl transferase center (PTC), which catalyzes the formation of peptide bonds, thereby polymerizing the amino acids delivered by tRNAs into a polypeptide chain. The nascent polypeptides leave the ribosome through a tunnel in the LSU and interact with protein factors that function in enzymatic processing, targeting, and the membrane insertion of nascent chains at the exit of the ribosomal tunnel. This chain is Large ribosomal subunit protein uL18 (RPL5), found in Cucumis sativus (Cucumber).